The following is a 297-amino-acid chain: Phosphoribosylaminoimidazole-succinocarboxamide synthase (297 aa).

The protein belongs to the SAICAR synthetase family.

The catalysed reaction is 5-amino-1-(5-phospho-D-ribosyl)imidazole-4-carboxylate + L-aspartate + ATP = (2S)-2-[5-amino-1-(5-phospho-beta-D-ribosyl)imidazole-4-carboxamido]succinate + ADP + phosphate + 2 H(+). It participates in purine metabolism; IMP biosynthesis via de novo pathway; 5-amino-1-(5-phospho-D-ribosyl)imidazole-4-carboxamide from 5-amino-1-(5-phospho-D-ribosyl)imidazole-4-carboxylate: step 1/2. In Mycobacterium sp. (strain KMS), this protein is Phosphoribosylaminoimidazole-succinocarboxamide synthase.